The primary structure comprises 301 residues: MTQLKLPDIAAQTQAYAVPLNWVGMCGIALPVQFEGRTAAAKVDAGVSLVDGSSRGIHMSRLYLALGSLEHQPLTPLAIRQLLEDFLSSHASLSSAAYLRFSFEHLLNRPALISPLAGWKSYAVTVDTRIENEVFHVELSVSVPYSSTCPCSAALARQLIQQQFQTHFSEQKIEKAAVLQWLGSAEGIVATPHSQRSTAQVQVRLNSNQQVLPITELIDRIEASLGTAVQTAVKRADEQAFALANGQNLMFCEDAARRLHQALRQIEWSKAFKLRVEHAESLHAHDAVATSQWQWDVSCAV.

Belongs to the GTP cyclohydrolase IV family.

It carries out the reaction GTP + H2O = 7,8-dihydroneopterin 3'-triphosphate + formate + H(+). Its pathway is cofactor biosynthesis; 7,8-dihydroneopterin triphosphate biosynthesis; 7,8-dihydroneopterin triphosphate from GTP: step 1/1. Its function is as follows. Converts GTP to 7,8-dihydroneopterin triphosphate. The polypeptide is GTP cyclohydrolase FolE2 (Pseudomonas putida (strain GB-1)).